The following is a 371-amino-acid chain: UDP-N-acetylglucosamine--N-acetylmuramyl-(pentapeptide) pyrophosphoryl-undecaprenol N-acetylglucosamine transferase (371 aa).

UDP-N-acetyl-alpha-D-glucosamine contacts are provided by residues 15 to 17 (TGG), Asn-126, Arg-172, Ser-199, Ile-256, 275 to 280 (ALTVSE), and Gln-301.

It belongs to the glycosyltransferase 28 family. MurG subfamily.

The protein localises to the cell inner membrane. It carries out the reaction di-trans,octa-cis-undecaprenyl diphospho-N-acetyl-alpha-D-muramoyl-L-alanyl-D-glutamyl-meso-2,6-diaminopimeloyl-D-alanyl-D-alanine + UDP-N-acetyl-alpha-D-glucosamine = di-trans,octa-cis-undecaprenyl diphospho-[N-acetyl-alpha-D-glucosaminyl-(1-&gt;4)]-N-acetyl-alpha-D-muramoyl-L-alanyl-D-glutamyl-meso-2,6-diaminopimeloyl-D-alanyl-D-alanine + UDP + H(+). Its pathway is cell wall biogenesis; peptidoglycan biosynthesis. Cell wall formation. Catalyzes the transfer of a GlcNAc subunit on undecaprenyl-pyrophosphoryl-MurNAc-pentapeptide (lipid intermediate I) to form undecaprenyl-pyrophosphoryl-MurNAc-(pentapeptide)GlcNAc (lipid intermediate II). The polypeptide is UDP-N-acetylglucosamine--N-acetylmuramyl-(pentapeptide) pyrophosphoryl-undecaprenol N-acetylglucosamine transferase (Francisella philomiragia subsp. philomiragia (strain ATCC 25017 / CCUG 19701 / FSC 153 / O#319-036)).